The sequence spans 497 residues: Guanosine-5'-triphosphate,3'-diphosphate pyrophosphatase (497 aa).

This sequence belongs to the GppA/Ppx family. GppA subfamily.

It carries out the reaction guanosine 3'-diphosphate 5'-triphosphate + H2O = guanosine 3',5'-bis(diphosphate) + phosphate + H(+). The protein operates within purine metabolism; ppGpp biosynthesis; ppGpp from GTP: step 2/2. Its function is as follows. Catalyzes the conversion of pppGpp to ppGpp. Guanosine pentaphosphate (pppGpp) is a cytoplasmic signaling molecule which together with ppGpp controls the 'stringent response', an adaptive process that allows bacteria to respond to amino acid starvation, resulting in the coordinated regulation of numerous cellular activities. The sequence is that of Guanosine-5'-triphosphate,3'-diphosphate pyrophosphatase from Pseudoalteromonas translucida (strain TAC 125).